The primary structure comprises 877 residues: ABC transporter A family member 1 (877 aa).

7 helical membrane-spanning segments follow: residues tyrosine 46–isoleucine 66, valine 268–lysine 288, isoleucine 324–glycine 344, phenylalanine 347–phenylalanine 367, isoleucine 379–methionine 399, isoleucine 420–valine 440, and leucine 479–glycine 499. Residues leucine 552 to valine 788 form the ABC transporter domain. Position 591–598 (glycine 591–serine 598) interacts with ATP.

Belongs to the ABC transporter superfamily. ABCA family.

It localises to the membrane. This Dictyostelium discoideum (Social amoeba) protein is ABC transporter A family member 1 (abcA1).